The following is a 156-amino-acid chain: Transcription antitermination protein NusB (156 aa).

Belongs to the NusB family.

Involved in transcription antitermination. Required for transcription of ribosomal RNA (rRNA) genes. Binds specifically to the boxA antiterminator sequence of the ribosomal RNA (rrn) operons. The polypeptide is Transcription antitermination protein NusB (Rickettsia africae (strain ESF-5)).